Here is a 689-residue protein sequence, read N- to C-terminus: DNA ligase (689 aa).

NAD(+) is bound by residues 51-55 (DSEYD), 100-101 (SL), and Glu-129. The N6-AMP-lysine intermediate role is filled by Lys-131. Residues Arg-152, Glu-189, Lys-308, and Lys-332 each coordinate NAD(+). Positions 426, 429, 444, and 450 each coordinate Zn(2+). The BRCT domain occupies 609-689 (ADEQPLKGQT…ELLALLAANR (81 aa)).

Belongs to the NAD-dependent DNA ligase family. LigA subfamily. The cofactor is Mg(2+). Requires Mn(2+) as cofactor.

It catalyses the reaction NAD(+) + (deoxyribonucleotide)n-3'-hydroxyl + 5'-phospho-(deoxyribonucleotide)m = (deoxyribonucleotide)n+m + AMP + beta-nicotinamide D-nucleotide.. Its function is as follows. DNA ligase that catalyzes the formation of phosphodiester linkages between 5'-phosphoryl and 3'-hydroxyl groups in double-stranded DNA using NAD as a coenzyme and as the energy source for the reaction. It is essential for DNA replication and repair of damaged DNA. This Shewanella oneidensis (strain ATCC 700550 / JCM 31522 / CIP 106686 / LMG 19005 / NCIMB 14063 / MR-1) protein is DNA ligase.